We begin with the raw amino-acid sequence, 61 residues long: Myrmicitoxin(1)-Pm5a (61 aa).

The N-terminal stretch at 1–23 (MKAIIFLFAVLTVVAIIIPIISG) is a signal peptide. The propeptide occupies 24-33 (EPNAGPLAAS). Position 60 is a glutamine amide (Gln-60).

This sequence belongs to the formicidae venom clade 2 family. As to expression, expressed by the venom gland.

Its subcellular location is the secreted. Toxin that causes a rapid and irreversible paralysis when intrathoracically injected into insects (blowflies). Does not cause spontaneous nocifensive behaviors by intraplantar injection in mice. The sequence is that of Myrmicitoxin(1)-Pm5a from Pogonomyrmex maricopa (Maricopa harvester ant).